We begin with the raw amino-acid sequence, 289 residues long: Nitrogenase iron protein (289 aa).

An ATP-binding site is contributed by 8–15; it reads GKGGIGKS. [4Fe-4S] cluster is bound at residue Cys-96. Position 99 is an ADP-ribosylarginine; by dinitrogenase reductase ADP-ribosyltransferase (Arg-99). Residue Cys-130 participates in [4Fe-4S] cluster binding.

The protein belongs to the NifH/BchL/ChlL family. In terms of assembly, homodimer. Requires [4Fe-4S] cluster as cofactor. The reversible ADP-ribosylation of Arg-99 inactivates the nitrogenase reductase and regulates nitrogenase activity.

It catalyses the reaction N2 + 8 reduced [2Fe-2S]-[ferredoxin] + 16 ATP + 16 H2O = H2 + 8 oxidized [2Fe-2S]-[ferredoxin] + 2 NH4(+) + 16 ADP + 16 phosphate + 6 H(+). In terms of biological role, the key enzymatic reactions in nitrogen fixation are catalyzed by the nitrogenase complex, which has 2 components: the iron protein and the molybdenum-iron protein. The polypeptide is Nitrogenase iron protein (Parafrankia sp. (strain EAN1pec)).